A 574-amino-acid chain; its full sequence is Zinc finger protein 394 (574 aa).

Ser12 bears the Phosphoserine mark. Lys40 is covalently cross-linked (Glycyl lysine isopeptide (Lys-Gly) (interchain with G-Cter in SUMO2)). Positions 64 to 146 (RLHFRQLRYQ…AVVRALQRAL (83 aa)) constitute an SCAN box domain. One can recognise a KRAB domain in the interval 155-230 (VTFEDMAVSL…LQEAFQGKHP (76 aa)). The disordered stretch occupies residues 182-202 (ESAQKDSGSTVPPSLESRVEN). Residues Lys203, Lys228, and Lys254 each participate in a glycyl lysine isopeptide (Lys-Gly) (interchain with G-Cter in SUMO2) cross-link. Residues 231–284 (LFSKCGSTHEDRVEKQSGNPLPLKLENSAEAEGLNSISDVNKNGSIEGEDSKNN) form a disordered region. The segment covering 265–274 (NSISDVNKNG) has biased composition (polar residues). Residue Lys282 forms a Glycyl lysine isopeptide (Lys-Gly) (interchain with G-Cter in SUMO2) linkage. 7 consecutive C2H2-type zinc fingers follow at residues 358-380 (YKCG…QRIH), 386-408 (YGCQ…QRTH), 414-436 (YTCL…QSTH), 442-463 (FKCE…QRLH), 469-491 (YKCE…HRIH), 497-519 (YGCS…QRIH), and 525-547 (YKCL…QRIH). Lys443 participates in a covalent cross-link: Glycyl lysine isopeptide (Lys-Gly) (interchain with G-Cter in SUMO2).

Belongs to the krueppel C2H2-type zinc-finger protein family.

It localises to the nucleus. May be involved in transcriptional regulation. This Pongo abelii (Sumatran orangutan) protein is Zinc finger protein 394 (ZNF394).